A 365-amino-acid chain; its full sequence is Cytoplasmic tRNA 2-thiolation protein 1 (365 aa).

The protein belongs to the TtcA family. CTU1/NCS6/ATPBD3 subfamily.

It localises to the cytoplasm. The protein operates within tRNA modification; 5-methoxycarbonylmethyl-2-thiouridine-tRNA biosynthesis. Plays a central role in 2-thiolation of mcm(5)S(2)U at tRNA wobble positions of tRNA(Lys), tRNA(Glu) and tRNA(Gln). Directly binds tRNAs and probably acts by catalyzing adenylation of tRNAs, an intermediate required for 2-thiolation. It is unclear whether it acts as a sulfurtransferase that transfers sulfur from thiocarboxylated URM1 onto the uridine of tRNAs at wobble position. Prior mcm(5) tRNA modification by the elongator complex is required for 2-thiolation. May also be involved in protein urmylation. In Yarrowia lipolytica (strain CLIB 122 / E 150) (Yeast), this protein is Cytoplasmic tRNA 2-thiolation protein 1.